The primary structure comprises 80 residues: Nuclear protein 1 (80 aa).

The interval 40 to 80 (GGRKGRTKREAAANTNRPSPGGHERKLLTKFQNSERKKAWR) is disordered. Positions 61 to 80 (GHERKLLTKFQNSERKKAWR) are enriched in basic and acidic residues. The Nuclear localization signal signature appears at 64–80 (RKLLTKFQNSERKKAWR).

The protein belongs to the NUPR family. In terms of assembly, monomer. Directly interacts with MSL1 and binds MORF4L1, two components of histone acetyltransferase complex; the interaction with MORF4L1 may be mediated by MSL1. Interacts with EP300; this interaction enhances the effect of EP300 on PAX2 transcription factor activity. Interacts with PAXIP1; this interaction prevents PAXIP1 inhibition of PAX2 transcription factor activity. Interacts with COPS5; this interaction allows COPS5-dependent CDKN1B nuclear to cytoplasm translocation. Interacts with RNF2. Interacts with FOXO3; this interaction represses FOXO3 transactivation. Interacts with PTMA; regulates apoptotic process. Interacts with MYOD1, EP300 and DDX5; this interaction coordinates the association of anti-proliferative and pro-myogenic proteins at the myogenin promoter. Interacts with TP53; interaction is stress-dependent. Forms a complex with EP300 and TP53; this complex binds CDKN1A promoter leading to transcriptional induction of CDKN1A. Phosphorylated. Phosphorylation promotes DNA-binding activity. In terms of processing, acetylated. In terms of tissue distribution, strongly activated in pancreatic acinar cells during the acute phase of pancreatitis, in developing pancreas and during pancreatic regeneration.

Its subcellular location is the nucleus. It localises to the cytoplasm. The protein resides in the perinuclear region. Its function is as follows. Transcription regulator that converts stress signals into a program of gene expression that empowers cells with resistance to the stress induced by a change in their microenvironment. Thereby participates in the regulation of many processes namely cell-cycle, apoptosis, autophagy and DNA repair responses. Controls cell cycle progression and protects cells from genotoxic stress induced by doxorubicin through the complex formation with TP53 and EP300 that binds CDKN1A promoter leading to transcriptional induction of CDKN1A. Protects pancreatic cancer cells from stress-induced cell death by binding the RELB promoter and activating its transcription, leading to IER3 transactivation. Negatively regulates apoptosis through interaction with PTMA. Inhibits autophagy-induced apoptosis in cardiac cells through FOXO3 interaction, inducing cytoplasmic translocation of FOXO3 thereby preventing the FOXO3 association with the pro-autophagic BNIP3 promoter. Inhibits cell growth and facilitates programmed cell death by apoptosis after adriamycin-induced DNA damage through transactivation of TP53. Regulates methamphetamine-induced apoptosis and autophagy through DDIT3-mediated endoplasmic reticulum stress pathway. Participates in DNA repair following gamma-irradiation by facilitating DNA access of the transcription machinery through interaction with MSL1 leading to inhibition of histone H4' Lys-16' acetylation (H4K16ac). Coactivator of PAX2 transcription factor activity, both by recruiting the EP300 cofactor to increase PAX2 transcription factor activity and by binding PAXIP1 to suppress PAXIP1-induced inhibition on PAX2. Positively regulates cell cycle progression through interaction with COPS5 inducing cytoplasmic translocation of CDKN1B leading to the CDKN1B degradation. Coordinates, through its interaction with EP300, the assiociation of MYOD1, EP300 and DDX5 to the MYOG promoter, leading to inhibition of cell-cycle progression and myogenic differentiation promotion. Negatively regulates beta cell proliferation via inhibition of cell-cycle regulatory genes expression through the suppression of their promoter activities. Also required for LHB expression and ovarian maturation. Exacerbates CNS inflammation and demyelination upon cuprizone treatment. This Rattus norvegicus (Rat) protein is Nuclear protein 1.